A 154-amino-acid polypeptide reads, in one-letter code: Transcriptional repressor NrdR (154 aa).

The segment at 3–34 (CPTCKYNGTRVVDSRPADDGNSIRRRRECEKC) is a zinc-finger region. The ATP-cone domain maps to 49–139 (LIVVKKDGAR…VYRQFKDISV (91 aa)).

The protein belongs to the NrdR family. The cofactor is Zn(2+).

Its function is as follows. Negatively regulates transcription of bacterial ribonucleotide reductase nrd genes and operons by binding to NrdR-boxes. This Listeria innocua serovar 6a (strain ATCC BAA-680 / CLIP 11262) protein is Transcriptional repressor NrdR.